The following is a 47-amino-acid chain: U18-ctenitoxin-Pn1a (47 aa).

5 disulfides stabilise this stretch: Cys-2-Cys-16, Cys-9-Cys-22, Cys-13-Cys-46, Cys-15-Cys-34, and Cys-24-Cys-32.

In terms of tissue distribution, expressed by the venom gland.

It is found in the secreted. Neurotoxin. Causes spastic paralysis and death in mice by intracerebroventricular injection at dose levels of 3 ug per mouse. The protein is U18-ctenitoxin-Pn1a of Phoneutria nigriventer (Brazilian armed spider).